The primary structure comprises 308 residues: NAD kinase (308 aa).

Catalysis depends on Asp-86, which acts as the Proton acceptor. NAD(+) is bound by residues 86–87, Arg-91, 160–161, Asp-190, and 201–206; these read DG, NE, and TAYAFS.

This sequence belongs to the NAD kinase family. The cofactor is a divalent metal cation.

It localises to the cytoplasm. It catalyses the reaction NAD(+) + ATP = ADP + NADP(+) + H(+). Functionally, involved in the regulation of the intracellular balance of NAD and NADP, and is a key enzyme in the biosynthesis of NADP. Catalyzes specifically the phosphorylation on 2'-hydroxyl of the adenosine moiety of NAD to yield NADP. This chain is NAD kinase, found in Mycolicibacterium paratuberculosis (strain ATCC BAA-968 / K-10) (Mycobacterium paratuberculosis).